Here is a 171-residue protein sequence, read N- to C-terminus: Myelin basic protein (171 aa).

A1 is subject to N-acetylalanine. A phosphoserine mark is found at S7 and S12. Y14 carries the post-translational modification Phosphotyrosine. Phosphothreonine is present on T17. S19 bears the Phosphoserine mark. At T20 the chain carries Phosphothreonine. Citrulline is present on residues R25 and R31. At T35 the chain carries Phosphothreonine. Position 40 is a phosphoserine (S40). Omega-N-methylarginine occurs at positions 43 and 49. Residues 44–115 form a disordered region; that stretch reads FFGGDRGAPK…GRGLSLSRFS (72 aa). S56 is subject to Phosphoserine. The residue at position 69 (Y69) is a Phosphotyrosine. S76 is modified (phosphoserine). 3 positions are modified to phosphothreonine: T80, T95, and T98. Q103 carries the post-translational modification Deamidated glutamine. At R107 the chain carries Omega-N-methylarginine; alternate. Position 107 is a symmetric dimethylarginine; alternate (R107). S115 carries the phosphoserine modification. Residues R122 and R130 each carry the citrulline modification. Q148 carries the deamidated glutamine modification. Citrulline is present on R160. S162 bears the Phosphoserine mark. Phosphoserine; by UHMK1 is present on S166. R171 is subject to Citrulline.

This sequence belongs to the myelin basic protein family. Homodimer. Post-translationally, as in other animals, several charge isomers may be produced as a result of optional post-translational modifications, such as phosphorylation of serine or threonine residues, deamidation of glutamine or asparagine residues, citrullination and methylation of arginine residues. Phosphorylated by TAOK2, VRK2, MAPK11, MAPK12, MAPK14 and MINK1. In terms of processing, proteolytically cleaved in B cell lysosomes by cathepsin CTSG which degrades the major immunogenic MBP epitope and prevents the activation of MBP-specific autoreactive T cells.

The protein resides in the myelin membrane. Its function is as follows. Is, with PLP, the most abundant protein component of the myelin membrane in the CNS. Has a role in both the formation and stabilization of this compact multilayer arrangement of bilayers. Each splice variant and charge isomer may have a specialized function in the assembly of an optimized, biochemically functional myelin membrane. In Pan troglodytes (Chimpanzee), this protein is Myelin basic protein (MBP).